The following is a 276-amino-acid chain: Glutamate 5-kinase (276 aa).

Lys14 serves as a coordination point for ATP. 3 residues coordinate substrate: Ser54, Asp141, and Asn157. ATP is bound by residues 177-178 (SD) and 219-225 (TGGMLTK).

Belongs to the glutamate 5-kinase family.

The protein localises to the cytoplasm. The catalysed reaction is L-glutamate + ATP = L-glutamyl 5-phosphate + ADP. The protein operates within amino-acid biosynthesis; L-proline biosynthesis; L-glutamate 5-semialdehyde from L-glutamate: step 1/2. Functionally, catalyzes the transfer of a phosphate group to glutamate to form L-glutamate 5-phosphate. This is Glutamate 5-kinase from Listeria welshimeri serovar 6b (strain ATCC 35897 / DSM 20650 / CCUG 15529 / CIP 8149 / NCTC 11857 / SLCC 5334 / V8).